The chain runs to 259 residues: Undecaprenyl-diphosphatase 3 (259 aa).

Transmembrane regions (helical) follow at residues 1-21 (MNWL…FLPI), 39-59 (AGLF…FIYY), 71-91 (FSKL…IGLL), 99-119 (ISKT…FLYM), 133-153 (ITYK…FPAI), 174-194 (AYFS…LQFV), 208-228 (SLIV…SWMI), and 236-256 (LKVF…LQFT).

The protein belongs to the UppP family.

It is found in the cell membrane. It carries out the reaction di-trans,octa-cis-undecaprenyl diphosphate + H2O = di-trans,octa-cis-undecaprenyl phosphate + phosphate + H(+). Functionally, catalyzes the dephosphorylation of undecaprenyl diphosphate (UPP). Confers resistance to bacitracin. This Bacillus cereus (strain ATCC 10987 / NRS 248) protein is Undecaprenyl-diphosphatase 3.